The sequence spans 463 residues: Metacaspase-1 (463 aa).

A disordered region spans residues 1-149; it reads MSWNQYPGGG…PQLQGQGGQS (149 aa). Residues 7 to 18 are compositionally biased toward gly residues; the sequence is PGGGHHQQGGYG. Residues 20–56 are compositionally biased toward pro residues; it reads RPPPPQWAQQGPPPPPNMGYRPPPPPQAYYNNPPPPQ. Residues 57–83 show a composition bias toward low complexity; the sequence is QYQRPAPQQNGYQQGGYQQQQQSQGNY. Active-site residues include His-247 and Cys-309.

Belongs to the peptidase C14B family.

Functionally, involved in cell death (apoptosis). This chain is Metacaspase-1 (MCA1), found in Cryptococcus neoformans var. neoformans serotype D (strain B-3501A) (Filobasidiella neoformans).